Here is a 94-residue protein sequence, read N- to C-terminus: ESAT-6-like protein EsxI (94 aa).

Belongs to the WXG100 family. ESAT-6 subfamily.

It localises to the secreted. The chain is ESAT-6-like protein EsxI from Mycobacterium tuberculosis (strain ATCC 25618 / H37Rv).